A 156-amino-acid chain; its full sequence is Small ribosomal subunit protein uS7 (156 aa).

Belongs to the universal ribosomal protein uS7 family. Part of the 30S ribosomal subunit. Contacts proteins S9 and S11.

One of the primary rRNA binding proteins, it binds directly to 16S rRNA where it nucleates assembly of the head domain of the 30S subunit. Is located at the subunit interface close to the decoding center, probably blocks exit of the E-site tRNA. This chain is Small ribosomal subunit protein uS7, found in Lacticaseibacillus casei (strain BL23) (Lactobacillus casei).